The following is a 205-amino-acid chain: Small ribosomal subunit protein uS4 (205 aa).

Positions 1 to 16 are enriched in basic and acidic residues; the sequence is MSKRESSKYKIDRRMG. The interval 1–46 is disordered; sequence MSKRESSKYKIDRRMGENIWGRPKSPVNRREYGPGQHGQRRKSKLS. Residues 94 to 157 form the S4 RNA-binding domain; that stretch reads SRLDAIVYRA…KQLVTVLEAV (64 aa).

Belongs to the universal ribosomal protein uS4 family. As to quaternary structure, part of the 30S ribosomal subunit. Contacts protein S5. The interaction surface between S4 and S5 is involved in control of translational fidelity.

One of the primary rRNA binding proteins, it binds directly to 16S rRNA where it nucleates assembly of the body of the 30S subunit. In terms of biological role, with S5 and S12 plays an important role in translational accuracy. This is Small ribosomal subunit protein uS4 from Rhizobium meliloti (strain 1021) (Ensifer meliloti).